A 498-amino-acid chain; its full sequence is Tyrosine 3-monooxygenase (498 aa).

The span at 1–10 (MPTPSAPSPQ) shows a compositional bias: pro residues. The interval 1-31 (MPTPSAPSPQPKGFRRAVSEQDAKQAEAVTS) is disordered. Ser19 is modified (phosphoserine; by CaMK2). At Ser31 the chain carries Phosphoserine. Position 40 is a phosphoserine; by CaMK2 and PKA (Ser40). His331, His336, and Glu376 together coordinate Fe cation. A Phosphoserine modification is found at Ser472.

It belongs to the biopterin-dependent aromatic amino acid hydroxylase family. As to quaternary structure, homotetramer. Interacts (when phosphorylated at Ser-19) with YWHAG; one YWHAG dimer binds to one TH tetramer and this interaction may influence the phosphorylation and dephosphorylation of other sites. Interacts with NT5DC2; the interaction results in reduced phosphorylation and decreased catalytic activity of TH. It depends on Fe(2+) as a cofactor. In terms of processing, phosphorylated on Ser-19, Ser-31 and Ser-40 by several protein kinases with different site specificities. Phosphorylation at Ser-31 and Ser-40 leads to an increase of TH activity. Phosphorylation at Ser-40 activates the enzyme and also counteracts the feedback inhibition of TH by catecholamines. Phosphorylation of Ser-19 and Ser-31 triggers the proteasomal degradation of TH through the ubiquitin-proteasome pathway. Phosphorylation at Ser-31 facilitates transport of TH from the soma to the nerve terminals via the microtubule network. Phosphorylation at Ser-19 induces the high-affinity binding to the 14-3-3 protein YWHAG; this interaction may influence the phosphorylation and dephosphorylation of other sites. Ser-19 increases the phosphorylation at Ser-40 in a hierarchical manner, leading to increased activity.

It localises to the cytoplasm. The protein resides in the perinuclear region. It is found in the nucleus. Its subcellular location is the cell projection. The protein localises to the axon. It localises to the cytoplasmic vesicle. The protein resides in the secretory vesicle. It is found in the synaptic vesicle. The catalysed reaction is (6R)-L-erythro-5,6,7,8-tetrahydrobiopterin + L-tyrosine + O2 = (4aS,6R)-4a-hydroxy-L-erythro-5,6,7,8-tetrahydrobiopterin + L-dopa. The protein operates within catecholamine biosynthesis; dopamine biosynthesis; dopamine from L-tyrosine: step 1/2. With respect to regulation, inhibited in feedback fashion by the catecholamine neurotransmitters, especially by dopamine in competition with tetrahydrobiopterin. Phosphorylation of several Ser/Thr residues in the N-terminus regulates the catalytic activity. Ser-31 and Ser-40 are readily phosphorylated to activate the catalytic activity. A cysteine modification induced by N-ethylmaleimide (NEM), inhibits tyrosine 3-monooxygenase activity through the modification of the Cys-177. In terms of biological role, catalyzes the conversion of L-tyrosine to L-dihydroxyphenylalanine (L-Dopa), the rate-limiting step in the biosynthesis of catecholamines, dopamine, noradrenaline, and adrenaline. Uses tetrahydrobiopterin and molecular oxygen to convert tyrosine to L-Dopa. In addition to tyrosine, is able to catalyze the hydroxylation of phenylalanine and tryptophan but with lower specificity. Positively regulates the regression of retinal hyaloid vessels during postnatal development. The polypeptide is Tyrosine 3-monooxygenase (Th) (Rattus norvegicus (Rat)).